A 942-amino-acid chain; its full sequence is MDRFRIQDGKYVVEKEIGKGSFATVYRGHVTTDPKSHIAVKAVARSKLKNKKLLENLEIEIAILKKIKHPHIVGLIDCERTTTDFYLVMDYCALGDLTFLIKKRKELENNHPLLQTVFNKYPPPSKEHNGLNRAFVVCYLQQLASALKFLRSKNLVHRDIKPQNLLLATPLTNYRDSKTFHELGYVGIYNLPILKIADFGFARFLPSTSLAETLCGSPLYMAPEILNYQKYNAKADLWSVGTVLFEMCCGVPPFTASNHLELFKKIKRAHDEINFPEVCEVEDGLKELICSLLTFDPAKRIGFEEFFNNKIVTEDLSHYEVDENTELESKSKDLQESNMFVSEFLIKKRNQKGVSSRKDTEFIPKSKQEPMLDQAYKDETEMETGVKYGVNIAPEVYQNEMIDPEKLAAKLIAAKQLGSDEKLTNKNISHLLSSNSSRVNKLDKSNLSGKSDSSLDRDYVVVEKKAVEVNSLADDLAQANVGNNDEAVKDQNIKTLEQPHIQVHQPHNDIQNLQRAPSTTSGGTSSRRASLVERRLSISSLNPSNALSRALGLASTRIFGSSAQTNKNQTSNSTSPNYTQPLLNSQIFYDLTENLILHTETLNQPALINVDHAKGINEVIRILESLSAKAFVVYSYAEVKYAQIIPLPQAVIRASPALQFEKRLSDDSNPVIDEDSDEELDVQKNLSNTLLSETVNTRYRLRNDSSRNSYNKRNSFNKERFSFSSQGSNNSKRTNSYSSTLLPAEIISISKEAIVLYMKALQILAQSMKITSKWWYSCQEKICSLRLNILVQWIREKFNECLDKTDFLRMKLEEYENSKPGTHNQSPKSKISNDSNEDNVAEKVYLEKLLYDRALEISKYAANLELQGQNLHICELAYATSLWMLTISLENSPYTDQGEDEYDEFLKDTNDVLDSEDKIIIGKYIKSISHRLKMLRQKMAKY.

Positions 11–312 (YVVEKEIGKG…FEEFFNNKIV (302 aa)) constitute a Protein kinase domain. ATP contacts are provided by residues 17 to 25 (IGKGSFATV) and Lys41. Residue Asp159 is the Proton acceptor of the active site. The span at 435–452 (NSSRVNKLDKSNLSGKSD) shows a compositional bias: polar residues. 3 disordered regions span residues 435–454 (NSSR…SDSS), 505–529 (QPHN…SRRA), and 817–836 (NSKP…NDSN). A compositionally biased stretch (low complexity) spans 515-529 (RAPSTTSGGTSSRRA). Positions 819-834 (KPGTHNQSPKSKISND) are enriched in polar residues.

It belongs to the protein kinase superfamily. Ser/Thr protein kinase family. APG1/unc-51/ULK1 subfamily. As to quaternary structure, homodimer. Forms a ternary complex with ATG13 and ATG17.

The protein localises to the cytoplasm. Its subcellular location is the preautophagosomal structure membrane. The catalysed reaction is L-seryl-[protein] + ATP = O-phospho-L-seryl-[protein] + ADP + H(+). It carries out the reaction L-threonyl-[protein] + ATP = O-phospho-L-threonyl-[protein] + ADP + H(+). Its function is as follows. Serine/threonine protein kinase involved in the cytoplasm to vacuole transport (Cvt) and found to be essential in autophagy, where it is required for the formation of autophagosomes. Involved in the clearance of protein aggregates which cannot be efficiently cleared by the proteasome. Required for selective autophagic degradation of the nucleus (nucleophagy) as well as for mitophagy which contributes to regulate mitochondrial quantity and quality by eliminating the mitochondria to a basal level to fulfill cellular energy requirements and preventing excess ROS production. Also involved in endoplasmic reticulum-specific autophagic process, in selective removal of ER-associated degradation (ERAD) substrates. Plays a key role in ATG9 and ATG23 cycling through the pre-autophagosomal structure and is necessary to promote ATG18 binding to ATG9 through phosphorylation of ATG9. Catalyzes phosphorylation of ATG4, decreasing the interaction between ATG4 and ATG8 and impairing deconjugation of PE-conjugated forms of ATG8. Contributes to virulence by conferring resistance to unstable nutrient environments and immune defense of hosts. This Candida glabrata (strain ATCC 2001 / BCRC 20586 / JCM 3761 / NBRC 0622 / NRRL Y-65 / CBS 138) (Yeast) protein is Serine/threonine-protein kinase ATG1.